We begin with the raw amino-acid sequence, 104 residues long: Large ribosomal subunit protein uL24 (104 aa).

It belongs to the universal ribosomal protein uL24 family. Part of the 50S ribosomal subunit.

One of two assembly initiator proteins, it binds directly to the 5'-end of the 23S rRNA, where it nucleates assembly of the 50S subunit. Its function is as follows. One of the proteins that surrounds the polypeptide exit tunnel on the outside of the subunit. The polypeptide is Large ribosomal subunit protein uL24 (Pseudomonas aeruginosa (strain LESB58)).